The chain runs to 140 residues: Nucleoside diphosphate kinase (140 aa).

Residues lysine 11, phenylalanine 59, arginine 87, threonine 93, arginine 104, and asparagine 114 each coordinate ATP. Histidine 117 serves as the catalytic Pros-phosphohistidine intermediate.

The protein belongs to the NDK family. In terms of assembly, homotetramer. It depends on Mg(2+) as a cofactor.

It is found in the cytoplasm. The enzyme catalyses a 2'-deoxyribonucleoside 5'-diphosphate + ATP = a 2'-deoxyribonucleoside 5'-triphosphate + ADP. The catalysed reaction is a ribonucleoside 5'-diphosphate + ATP = a ribonucleoside 5'-triphosphate + ADP. In terms of biological role, major role in the synthesis of nucleoside triphosphates other than ATP. The ATP gamma phosphate is transferred to the NDP beta phosphate via a ping-pong mechanism, using a phosphorylated active-site intermediate. The sequence is that of Nucleoside diphosphate kinase from Methylocella silvestris (strain DSM 15510 / CIP 108128 / LMG 27833 / NCIMB 13906 / BL2).